The primary structure comprises 121 residues: Small ribosomal subunit protein uS13 (121 aa).

A disordered region spans residues 92–121 (KRGLPVRGQRTRTNARTRKGPRRAAASLKK).

Belongs to the universal ribosomal protein uS13 family. In terms of assembly, part of the 30S ribosomal subunit. Forms a loose heterodimer with protein S19. Forms two bridges to the 50S subunit in the 70S ribosome.

Its function is as follows. Located at the top of the head of the 30S subunit, it contacts several helices of the 16S rRNA. In the 70S ribosome it contacts the 23S rRNA (bridge B1a) and protein L5 of the 50S subunit (bridge B1b), connecting the 2 subunits; these bridges are implicated in subunit movement. Contacts the tRNAs in the A and P-sites. In Bordetella bronchiseptica (strain ATCC BAA-588 / NCTC 13252 / RB50) (Alcaligenes bronchisepticus), this protein is Small ribosomal subunit protein uS13.